The primary structure comprises 396 residues: Mitogen-activated protein kinase mpkC (396 aa).

The 280-residue stretch at 20–299 (YSDLQPVGLG…AAKALEHPYL (280 aa)) folds into the Protein kinase domain. ATP contacts are provided by residues 26–34 (VGLGAFGLV) and lysine 49. Aspartate 141 (proton acceptor) is an active-site residue. Residue threonine 171 is modified to Phosphothreonine. The TXY motif lies at 171-173 (TGY). The residue at position 173 (tyrosine 173) is a Phosphotyrosine.

The protein belongs to the protein kinase superfamily. Ser/Thr protein kinase family. MAP kinase subfamily. HOG1 sub-subfamily. It depends on Mg(2+) as a cofactor. Post-translationally, dually phosphorylated on Thr-171 and Tyr-173, which activates the enzyme.

It carries out the reaction L-seryl-[protein] + ATP = O-phospho-L-seryl-[protein] + ADP + H(+). The catalysed reaction is L-threonyl-[protein] + ATP = O-phospho-L-threonyl-[protein] + ADP + H(+). With respect to regulation, activated by tyrosine and threonine phosphorylation. Its function is as follows. Mitogen-activated protein kinase required for growth on media where sorbitol or mannitol is the sole carbon source. This is Mitogen-activated protein kinase mpkC (mpkC) from Aspergillus niger (strain ATCC MYA-4892 / CBS 513.88 / FGSC A1513).